The sequence spans 769 residues: Serine protease HtrA-like (769 aa).

Residues 1–20 (MDIGKKHVIPKSQYRRKRRE) show a composition bias toward basic residues. A disordered region spans residues 1 to 388 (MDIGKKHVIP…KKATSKLNKG (388 aa)). Basic and acidic residues-rich tracts occupy residues 21–64 (FFHN…ERFK), 71–87 (LEQR…EESK), and 96–108 (YNKD…DVSK). Over residues 126 to 139 (YEQNTEATLSTNST) the composition is skewed to polar residues. Basic and acidic residues predominate over residues 140–186 (DKVESTDMRKLSSDKNKVGHEEQHVLSKPSEHDKETRIDFESSRTDS). Positions 247–262 (QQSQNEQTKTYTYGDS) are enriched in polar residues. Basic and acidic residues-rich tracts occupy residues 264–296 (QNDK…HIVD) and 310–330 (KIDD…HKQN). Positions 331–347 (ADSSETVGYQSQSSASH) are enriched in polar residues. Over residues 348 to 364 (RSTEKRNMAINDHDKLN) the composition is skewed to basic and acidic residues. Positions 366–388 (QKPNTKTSANNNQKKATSKLNKG) are enriched in polar residues. Residues 410-430 (LVILMGIIILIVILNAIFNNV) form a helical membrane-spanning segment. Active-site charge relay system residues include His504, Asp534, and Ser619. Positions 680–733 (IASLNSFERQAVKLLGKVKNGVVVDQVDNNGLADQSGLKKGDVITELDGKLLED) constitute a PDZ domain.

Belongs to the peptidase S1C family.

Its subcellular location is the cell membrane. The chain is Serine protease HtrA-like from Staphylococcus aureus (strain MRSA252).